The primary structure comprises 203 residues: Urease accessory protein UreG (203 aa).

Residue 14–21 (GPVGSGKT) coordinates GTP.

This sequence belongs to the SIMIBI class G3E GTPase family. UreG subfamily. In terms of assembly, homodimer. UreD, UreF and UreG form a complex that acts as a GTP-hydrolysis-dependent molecular chaperone, activating the urease apoprotein by helping to assemble the nickel containing metallocenter of UreC. The UreE protein probably delivers the nickel.

It is found in the cytoplasm. In terms of biological role, facilitates the functional incorporation of the urease nickel metallocenter. This process requires GTP hydrolysis, probably effectuated by UreG. This is Urease accessory protein UreG from Rhizobium leguminosarum bv. trifolii (strain WSM2304).